Here is a 503-residue protein sequence, read N- to C-terminus: UDP-N-acetylmuramoylalanine--D-glutamate ligase (503 aa).

129 to 135 is a binding site for ATP; that stretch reads GTNGKTT. A disordered region spans residues 284 to 305; the sequence is DSEAEGEGKPRRRKADATAQEA.

This sequence belongs to the MurCDEF family.

Its subcellular location is the cytoplasm. The enzyme catalyses UDP-N-acetyl-alpha-D-muramoyl-L-alanine + D-glutamate + ATP = UDP-N-acetyl-alpha-D-muramoyl-L-alanyl-D-glutamate + ADP + phosphate + H(+). Its pathway is cell wall biogenesis; peptidoglycan biosynthesis. Its function is as follows. Cell wall formation. Catalyzes the addition of glutamate to the nucleotide precursor UDP-N-acetylmuramoyl-L-alanine (UMA). The chain is UDP-N-acetylmuramoylalanine--D-glutamate ligase from Cupriavidus pinatubonensis (strain JMP 134 / LMG 1197) (Cupriavidus necator (strain JMP 134)).